Consider the following 85-residue polypeptide: U4-theraphotoxin-Hhn1a (85 aa).

The signal sequence occupies residues 1–22; it reads MKMTLIAILTCAAVLVLHITAA. A propeptide spanning residues 23–48 is cleaved from the precursor; it reads EELEAESQLMEVGMPDTELEAVDEER. 3 disulfides stabilise this stretch: Cys52–Cys66, Cys56–Cys77, and Cys71–Cys82.

The protein belongs to the neurotoxin 12 (Hwtx-2) family. 02 (Hwtx-2) subfamily. Monomer. In terms of tissue distribution, expressed by the venom gland.

It is found in the secreted. Functionally, neurotoxin active on both insects and mammals. The polypeptide is U4-theraphotoxin-Hhn1a (Cyriopagopus hainanus (Chinese bird spider)).